The sequence spans 415 residues: MGQRPQLRLVKALLLLGLNPVSTSLQDQQCESLSLASNVSGLQCNASVDLIGTCWPRSPAGQLVVRPCPAFFYGVRYNTTNNGYRECLANGSWAARVNYSECQEILNEEKKSKVHYHIAVIINYLGHCISLVALLVAFVLFLRLRSIRCLRNIIHWNLISAFILRNATWFVVQLTVSPEVHQSNVAWCRLVTAAYNYFHVTNFFWMFGEGCYLHTAIVLTYSTDRLRKWMFVCIGWGVPFPIIVAWAIGKLYYDNEKCWFGKRPGVYTDYIYQGPMILVLLINFIFLFNIVRILMTKLRASTTSETIQYRKAVKATLVLLPLLGITYMLFFVNPGEDEVSRVVFIYFNSFLESFQGFFVSVFYCFLNSEVRSAIRKRWRRWQDKHSIRARVARAMSIPTSPTRVSFHSIKQSTAV.

The first 23 residues, 1–23 (MGQRPQLRLVKALLLLGLNPVST), serve as a signal peptide directing secretion. The Extracellular segment spans residues 24–111 (SLQDQQCESL…CQEILNEEKK (88 aa)). 3 disulfides stabilise this stretch: C30-C54, C44-C87, and C68-C102. Residues N38, N45, N78, N90, and N98 are each glycosylated (N-linked (GlcNAc...) asparagine). The interval 99-108 (YSECQEILNE) is important for peptide agonist binding. A helical membrane pass occupies residues 112-142 (SKVHYHIAVIINYLGHCISLVALLVAFVLFL). Over 143-149 (RLRSIRC) the chain is Cytoplasmic. A helical membrane pass occupies residues 150 to 174 (LRNIIHWNLISAFILRNATWFVVQL). The Extracellular segment spans residues 175–189 (TVSPEVHQSNVAWCR). A disulfide bridge links C188 with C258. A helical membrane pass occupies residues 190–218 (LVTAAYNYFHVTNFFWMFGEGCYLHTAIV). The Cytoplasmic segment spans residues 219–225 (LTYSTDR). The helical transmembrane segment at 226–253 (LRKWMFVCIGWGVPFPIIVAWAIGKLYY) threads the bilayer. The Extracellular portion of the chain corresponds to 254 to 269 (DNEKCWFGKRPGVYTD). Residues 270–295 (YIYQGPMILVLLINFIFLFNIVRILM) form a helical membrane-spanning segment. Residues 280–290 (LLINFIFLFNI) are important for antagonist binding. The Cytoplasmic portion of the chain corresponds to 296–306 (TKLRASTTSET). S301 is subject to Phosphoserine; by PKA. A helical transmembrane segment spans residues 307-331 (IQYRKAVKATLVLLPLLGITYMLFF). At 332–338 (VNPGEDE) the chain is on the extracellular side. A helical transmembrane segment spans residues 339 to 368 (VSRVVFIYFNSFLESFQGFFVSVFYCFLNS). The Cytoplasmic portion of the chain corresponds to 369–415 (EVRSAIRKRWRRWQDKHSIRARVARAMSIPTSPTRVSFHSIKQSTAV).

It belongs to the G-protein coupled receptor 2 family. Heterodimer; heterodimerizes with GPER1. Interacts (via N-terminal extracellular domain) with CRH and UCN. Interacts with DLG1; this inhibits endocytosis of CRHR1 after agonist binding. Post-translationally, C-terminal Ser or Thr residues may be phosphorylated. In terms of processing, phosphorylation at Ser-301 by PKA prevents maximal coupling to Gq-protein, and thereby negatively regulates downstream signaling. As to expression, detected in brain cortex (at protein level).

The protein localises to the cell membrane. It localises to the endosome. Its function is as follows. G-protein coupled receptor for CRH (corticotropin-releasing factor) and UCN (urocortin). Has high affinity for CRH and UCN. Ligand binding causes a conformation change that triggers signaling via guanine nucleotide-binding proteins (G proteins) and down-stream effectors, such as adenylate cyclase. Promotes the activation of adenylate cyclase, leading to increased intracellular cAMP levels. Inhibits the activity of the calcium channel CACNA1H. Required for normal embryonic development of the adrenal gland and for normal hormonal responses to stress. Plays a role in the response to anxiogenic stimuli. The chain is Corticotropin-releasing factor receptor 1 (Crhr1) from Mus musculus (Mouse).